Here is a 120-residue protein sequence, read N- to C-terminus: Natriuretic peptide (120 aa).

Residues 1-25 (MVGLSRLADGGLLLVLALLPLALDG) form the signal peptide. A propeptide spanning residues 26–70 (KPAPLEKAPMAPARIIPYLRPVGKESRAALDRMVPPEDGDSRRLE) is cleaved from the precursor. The cysteines at positions 81 and 97 are disulfide-linked. Residues 110-120 (ILPYLRPIRKE) constitute a propeptide that is removed on maturation.

Belongs to the natriuretic peptide family. Expressed by the venom gland.

It localises to the secreted. Functionally, natriuretic peptide that dose-dependently induces the rapid relaxation of rat aortic strips phenylephrine-precontracted. Acts by stimulating cGMP production in a dose-dependent manner (by probably activating NPR1 and/or NPR2). May also show potent hypotensive effects. In Micrurus altirostris (Uruguayan coral snake), this protein is Natriuretic peptide.